A 233-amino-acid polypeptide reads, in one-letter code: 7-cyano-7-deazaguanine synthase (233 aa).

Residue 8–18 coordinates ATP; it reads FSGGQDSTTCL. Residues Cys188, Cys197, Cys200, and Cys203 each coordinate Zn(2+).

Belongs to the QueC family. The cofactor is Zn(2+).

It catalyses the reaction 7-carboxy-7-deazaguanine + NH4(+) + ATP = 7-cyano-7-deazaguanine + ADP + phosphate + H2O + H(+). Its pathway is purine metabolism; 7-cyano-7-deazaguanine biosynthesis. Its function is as follows. Catalyzes the ATP-dependent conversion of 7-carboxy-7-deazaguanine (CDG) to 7-cyano-7-deazaguanine (preQ(0)). This Klebsiella pneumoniae (strain 342) protein is 7-cyano-7-deazaguanine synthase.